We begin with the raw amino-acid sequence, 486 residues long: Mitogen-activated protein kinase 17 (486 aa).

Residues 16–307 enclose the Protein kinase domain; sequence YQIQEVVGKG…AEEALADPYF (292 aa). Residues 22–30 and Lys-45 each bind ATP; that span reads VGKGSYGVV. Asp-142 functions as the Proton acceptor in the catalytic mechanism. Thr-178 carries the phosphothreonine modification. Positions 178 to 180 match the TXY motif; the sequence is TDY. Residue Tyr-180 is modified to Phosphotyrosine. Thr-183 carries the phosphothreonine modification. The interval 386–455 is disordered; sequence EEHNDDEEEH…LSSQKASQVD (70 aa). The span at 422-433 shows a compositional bias: low complexity; sequence SVHAQSSSASVV. The span at 440-452 shows a compositional bias: polar residues; it reads PNTATGLSSQKAS.

The protein belongs to the protein kinase superfamily. CMGC Ser/Thr protein kinase family. MAP kinase subfamily. Dually phosphorylated on Thr-178 and Tyr-180, which activates the enzyme.

The enzyme catalyses L-seryl-[protein] + ATP = O-phospho-L-seryl-[protein] + ADP + H(+). It catalyses the reaction L-threonyl-[protein] + ATP = O-phospho-L-threonyl-[protein] + ADP + H(+). Activated by threonine and tyrosine phosphorylation. In Arabidopsis thaliana (Mouse-ear cress), this protein is Mitogen-activated protein kinase 17 (MPK17).